Here is a 204-residue protein sequence, read N- to C-terminus: Somatotropin (204 aa).

The first 17 residues, 1–17 (MDRVVLLLSVLSLGVSS), serve as a signal peptide directing secretion. Gln18 is modified (pyrrolidone carboxylic acid). 2 disulfide bridges follow: Cys69–Cys177 and Cys194–Cys202.

It belongs to the somatotropin/prolactin family.

It is found in the secreted. Growth hormone plays an important role in growth control and is involved in the regulation of several anabolic processes. Implicated as an osmoregulatory substance important for seawater adaptation. In Seriola quinqueradiata (Five-ray yellowtail), this protein is Somatotropin (gh).